Reading from the N-terminus, the 221-residue chain is Chalcone--flavanone isomerase (221 aa).

Substrate is bound by residues threonine 50, asparagine 115, and threonine 192.

Belongs to the chalcone isomerase family.

The catalysed reaction is a chalcone = a flavanone.. It participates in secondary metabolite biosynthesis; flavonoid biosynthesis. In terms of biological role, catalyzes the intramolecular cyclization of bicyclic chalcones into tricyclic (S)-flavanones. Responsible for the isomerization of 4,2',4',6'-tetrahydroxychalcone (also termed chalcone) into naringenin. This is Chalcone--flavanone isomerase (CHI) from Phaseolus vulgaris (Kidney bean).